The primary structure comprises 257 residues: Deoxyribose-phosphate aldolase (257 aa).

Asp102 (proton donor/acceptor) is an active-site residue. The Schiff-base intermediate with acetaldehyde role is filled by Lys166. Lys198 acts as the Proton donor/acceptor in catalysis.

The protein belongs to the DeoC/FbaB aldolase family. DeoC type 2 subfamily.

Its subcellular location is the cytoplasm. The enzyme catalyses 2-deoxy-D-ribose 5-phosphate = D-glyceraldehyde 3-phosphate + acetaldehyde. It functions in the pathway carbohydrate degradation; 2-deoxy-D-ribose 1-phosphate degradation; D-glyceraldehyde 3-phosphate and acetaldehyde from 2-deoxy-alpha-D-ribose 1-phosphate: step 2/2. In terms of biological role, catalyzes a reversible aldol reaction between acetaldehyde and D-glyceraldehyde 3-phosphate to generate 2-deoxy-D-ribose 5-phosphate. The chain is Deoxyribose-phosphate aldolase from Shewanella frigidimarina (strain NCIMB 400).